Here is a 363-residue protein sequence, read N- to C-terminus: Ferrochelatase (363 aa).

Positions 209 and 290 each coordinate Fe cation.

This sequence belongs to the ferrochelatase family.

It is found in the cytoplasm. It carries out the reaction heme b + 2 H(+) = protoporphyrin IX + Fe(2+). It participates in porphyrin-containing compound metabolism; protoheme biosynthesis; protoheme from protoporphyrin-IX: step 1/1. Its function is as follows. Catalyzes the ferrous insertion into protoporphyrin IX. The sequence is that of Ferrochelatase from Azoarcus sp. (strain BH72).